Consider the following 578-residue polypeptide: Dystrotelin (578 aa).

The ZZ-type zinc finger occupies 223–279; the sequence is THPARCTLCRTFPITGLRYRCLKCLNFDICQMCFLSGLHSKSHQKSHPVIEHCIQMS. Zn(2+) is bound by residues cysteine 228, cysteine 231, cysteine 243, cysteine 246, cysteine 252, cysteine 255, histidine 265, and histidine 269. Residues 322-351 adopt a coiled-coil conformation; it reads HHAQARLLKKQLNQYKDKLQAIYTSQEERI. The disordered stretch occupies residues 382 to 475; that stretch reads RLQPPGPSSS…QSQTQKMPQK (94 aa). Composition is skewed to basic and acidic residues over residues 399 to 410 and 431 to 451; these read KVDHSSTEKVPK and PKLDEVDRSHRSHTNAEHALR. The span at 455–472 shows a compositional bias: polar residues; that stretch reads SPETTLHSTRAQSQTQKM. Residues 503–537 are a coiled coil; the sequence is ALAAVEKKEAGNIKERKDELEEEELQELLSKLMDA.

It localises to the cell membrane. This is Dystrotelin (DYTN) from Homo sapiens (Human).